A 491-amino-acid polypeptide reads, in one-letter code: MSIPGLGQIAPQAPTTTQRTINLRPFGEWRFSIPHQHSTFSSNSSAAGVTVRLVAGTAERDGTELAPNCVYTFLPGTKSKLFTDQGCTLEINNTGGYPLEDRVVEHPPEQSPMLSYINLHFGLQDHERAAAAQAQQQHPTHHQQQQQGRGAGAGVARSKPGPRVLICGPPGVGKTSLAKLLAALATRMGSQPLVANLNPTDGLLCLPGTLGAAVFGTLMDVEEPAGGFGVTNTPISGPSAVPVKNPLTFYFGHEKVEDDVDMWRQMTERLAVLARRKFERNRDVRVAGLLVDTAPVEAGDKEGQELLGWAVRQFDANFVVVLGSEQLKTELGQRFASEKTSFEEPITVLGLDKSDGAVQIDKAWRQKSTETAIKEYFFGGIKARLSPFTQSASFDELVVFKAPDEPYEGAPVLERVEITPEMAHWTLAVMIASVTDSPQAIRFSSVLGFIVIADVDQERRRVKFLSPVSGRLGNHPLIWGRWPEPYLNLLA.

Residues Glu28 and Lys78 each coordinate ATP. Residues 128-160 (RAAAAQAQQQHPTHHQQQQQGRGAGAGVARSKP) form a disordered region. Low complexity predominate over residues 130–148 (AAAQAQQQHPTHHQQQQQG). Residue 171–176 (GVGKTS) coordinates ATP.

This sequence belongs to the Clp1 family. Clp1 subfamily. In terms of assembly, component of a pre-mRNA cleavage factor complex. Interacts directly with PCF11.

The protein localises to the nucleus. In terms of biological role, required for endonucleolytic cleavage during polyadenylation-dependent pre-mRNA 3'-end formation. In Neurospora crassa (strain ATCC 24698 / 74-OR23-1A / CBS 708.71 / DSM 1257 / FGSC 987), this protein is mRNA cleavage and polyadenylation factor clp1 (paa-7).